The primary structure comprises 112 residues: Nucleoid-associated protein FTM_1023 (112 aa).

Belongs to the YbaB/EbfC family. As to quaternary structure, homodimer.

The protein resides in the cytoplasm. It is found in the nucleoid. Functionally, binds to DNA and alters its conformation. May be involved in regulation of gene expression, nucleoid organization and DNA protection. The protein is Nucleoid-associated protein FTM_1023 of Francisella tularensis subsp. mediasiatica (strain FSC147).